A 394-amino-acid chain; its full sequence is Elongation factor Tu (394 aa).

One can recognise a tr-type G domain in the interval 10-205 (KPHMNVGTIG…SMDNYFDLPE (196 aa)). The segment at 19–26 (GHVDHGKT) is G1. 19 to 26 (GHVDHGKT) lines the GTP pocket. Position 26 (threonine 26) interacts with Mg(2+). Positions 61 to 65 (GITIN) are G2. Positions 82-85 (DCPG) are G3. Residues 82–86 (DCPGH) and 137–140 (NKLD) contribute to the GTP site. Residues 137–140 (NKLD) form a G4 region. The segment at 173–175 (SAF) is G5.

It belongs to the TRAFAC class translation factor GTPase superfamily. Classic translation factor GTPase family. EF-Tu/EF-1A subfamily. Monomer.

Its subcellular location is the cytoplasm. The catalysed reaction is GTP + H2O = GDP + phosphate + H(+). Functionally, GTP hydrolase that promotes the GTP-dependent binding of aminoacyl-tRNA to the A-site of ribosomes during protein biosynthesis. The chain is Elongation factor Tu from Borreliella afzelii (strain PKo) (Borrelia afzelii).